The following is a 563-amino-acid chain: Arginine--tRNA ligase (563 aa).

The short motif at 121-131 (PNIAKPMSMGH) is the 'HIGH' region element.

This sequence belongs to the class-I aminoacyl-tRNA synthetase family. As to quaternary structure, monomer.

The protein resides in the cytoplasm. It catalyses the reaction tRNA(Arg) + L-arginine + ATP = L-arginyl-tRNA(Arg) + AMP + diphosphate. This chain is Arginine--tRNA ligase, found in Leuconostoc citreum (strain KM20).